A 424-amino-acid chain; its full sequence is Na(+)/H(+) antiporter NhaP (424 aa).

12 consecutive transmembrane segments (helical) span residues 3 to 23 (DLVA…YRFI), 25 to 45 (LPPT…VQGL), 66 to 86 (FSEV…ALHV), 96 to 116 (WPIG…IGGL), 130 to 152 (FIYC…LGIL), 170 to 190 (LFND…LQLG), 200 to 220 (ILFV…GYGV), 246 to 266 (ALAA…GLII), 296 to 316 (ALLF…WLHV), 320 to 340 (FALG…AILV), 358 to 378 (ILVW…SLPL), and 384 to 404 (LILS…GLSI).

Belongs to the monovalent cation:proton antiporter 1 (CPA1) transporter (TC 2.A.36) family.

Its subcellular location is the cell inner membrane. Inhibited by amiloride. Functionally, na(+)/H(+) antiporter that extrudes sodium in exchange for external protons. Also has weak Li(+)/H(+) antiport activity. This is Na(+)/H(+) antiporter NhaP (nhaP) from Pseudomonas aeruginosa (strain ATCC 15692 / DSM 22644 / CIP 104116 / JCM 14847 / LMG 12228 / 1C / PRS 101 / PAO1).